The primary structure comprises 104 residues: L-rhamnose mutarotase (104 aa).

Y18 contributes to the substrate binding site. The Proton donor role is filled by H22. Substrate contacts are provided by residues Y41 and 76 to 77 (WW).

Belongs to the rhamnose mutarotase family. In terms of assembly, homodimer.

The protein localises to the cytoplasm. It catalyses the reaction alpha-L-rhamnose = beta-L-rhamnose. It participates in carbohydrate metabolism; L-rhamnose metabolism. Functionally, involved in the anomeric conversion of L-rhamnose. In Escherichia coli O1:K1 / APEC, this protein is L-rhamnose mutarotase.